Reading from the N-terminus, the 157-residue chain is 3-dehydroquinate dehydratase (157 aa).

The Proton acceptor role is filled by Y24. Residues N75, H81, and D88 each coordinate substrate. H101 (proton donor) is an active-site residue. Substrate contacts are provided by residues L102–S103 and R112.

It belongs to the type-II 3-dehydroquinase family. Homododecamer.

It catalyses the reaction 3-dehydroquinate = 3-dehydroshikimate + H2O. Its pathway is metabolic intermediate biosynthesis; chorismate biosynthesis; chorismate from D-erythrose 4-phosphate and phosphoenolpyruvate: step 3/7. Its function is as follows. Catalyzes a trans-dehydration via an enolate intermediate. The chain is 3-dehydroquinate dehydratase from Brucella canis (strain ATCC 23365 / NCTC 10854 / RM-666).